A 478-amino-acid chain; its full sequence is Alpha,alpha-trehalose-phosphate synthase [UDP-forming] (478 aa).

D-glucose 6-phosphate contacts are provided by tyrosine 89 and aspartate 143. The UDP site is built by arginine 280 and lysine 285. UDP-alpha-D-glucose-binding residues include arginine 280 and lysine 285. Residue arginine 318 coordinates D-glucose 6-phosphate. Residues isoleucine 357 and 383–387 contribute to the UDP site; that span reads LVSYE. UDP-alpha-D-glucose-binding positions include isoleucine 357 and 379-387; that span reads DGMNLVSYE.

The protein belongs to the glycosyltransferase 20 family.

It catalyses the reaction D-glucose 6-phosphate + UDP-alpha-D-glucose = alpha,alpha-trehalose 6-phosphate + UDP + H(+). Its pathway is carbohydrate biosynthesis. Inhibited by validoxylamine A, a non-reactive trehalose analog. Synthase catalytic subunit of the trehalose synthase complex that catalyzes the production of trehalose from glucose-6-phosphate and UDP-alpha-D-glucose in a two step process. The protein is Alpha,alpha-trehalose-phosphate synthase [UDP-forming] of Candida albicans (strain SC5314 / ATCC MYA-2876) (Yeast).